A 95-amino-acid polypeptide reads, in one-letter code: MNEERLFEILLAPHISEKGALTTGQYVFEVMPDATKPEIKRAVEKQFNVTVKSVRTCNVKGKTTRFRQVRGRRKNWKKAYVMLAPGSEIDIAAGE.

This sequence belongs to the universal ribosomal protein uL23 family. As to quaternary structure, part of the 50S ribosomal subunit. Contacts protein L29, and trigger factor when it is bound to the ribosome.

In terms of biological role, one of the early assembly proteins it binds 23S rRNA. One of the proteins that surrounds the polypeptide exit tunnel on the outside of the ribosome. Forms the main docking site for trigger factor binding to the ribosome. This chain is Large ribosomal subunit protein uL23, found in Coxiella burnetii (strain RSA 493 / Nine Mile phase I).